Here is a 92-residue protein sequence, read N- to C-terminus: Small ribosomal subunit protein uS19 (92 aa).

This sequence belongs to the universal ribosomal protein uS19 family.

Its function is as follows. Protein S19 forms a complex with S13 that binds strongly to the 16S ribosomal RNA. This is Small ribosomal subunit protein uS19 from Acidovorax sp. (strain JS42).